Consider the following 219-residue polypeptide: Imidazole glycerol phosphate synthase subunit HisH (219 aa).

Residues 2-218 enclose the Glutamine amidotransferase type-1 domain; the sequence is KVVVIDSGTG…MVWTPEGTSG (217 aa). Cys-87 (nucleophile) is an active-site residue. Catalysis depends on residues His-193 and Glu-195.

In terms of assembly, heterodimer of HisH and HisF.

Its subcellular location is the cytoplasm. It carries out the reaction 5-[(5-phospho-1-deoxy-D-ribulos-1-ylimino)methylamino]-1-(5-phospho-beta-D-ribosyl)imidazole-4-carboxamide + L-glutamine = D-erythro-1-(imidazol-4-yl)glycerol 3-phosphate + 5-amino-1-(5-phospho-beta-D-ribosyl)imidazole-4-carboxamide + L-glutamate + H(+). The catalysed reaction is L-glutamine + H2O = L-glutamate + NH4(+). It functions in the pathway amino-acid biosynthesis; L-histidine biosynthesis; L-histidine from 5-phospho-alpha-D-ribose 1-diphosphate: step 5/9. Functionally, IGPS catalyzes the conversion of PRFAR and glutamine to IGP, AICAR and glutamate. The HisH subunit catalyzes the hydrolysis of glutamine to glutamate and ammonia as part of the synthesis of IGP and AICAR. The resulting ammonia molecule is channeled to the active site of HisF. This chain is Imidazole glycerol phosphate synthase subunit HisH, found in Granulibacter bethesdensis (strain ATCC BAA-1260 / CGDNIH1).